Here is a 271-residue protein sequence, read N- to C-terminus: Mitochondrial distribution and morphology protein 12 (271 aa).

The region spanning 1–267 (MSFDINWSTL…WPSWINLDFN (267 aa)) is the SMP-LTD domain. A Glycyl lysine isopeptide (Lys-Gly) (interchain with G-Cter in ubiquitin) cross-link involves residue Lys49.

Belongs to the MDM12 family. In terms of assembly, component of the ER-mitochondria encounter structure (ERMES) or MDM complex, composed of MMM1, MDM10, MDM12 and MDM34. An MMM1 homodimer associates with one molecule of MDM12 on each side in a pairwise head-to-tail manner, and the SMP-LTD domains of MMM1 and MDM12 generate a continuous hydrophobic tunnel for phospholipid trafficking. Interacts with PUF3.

Its subcellular location is the mitochondrion outer membrane. It localises to the endoplasmic reticulum membrane. Its function is as follows. Component of the ERMES/MDM complex, which serves as a molecular tether to connect the endoplasmic reticulum (ER) and mitochondria. Components of this complex are involved in the control of mitochondrial shape and protein biogenesis, and function in nonvesicular lipid trafficking between the ER and mitochondria. MDM12 is required for the interaction of the ER-resident membrane protein MMM1 and the outer mitochondrial membrane-resident beta-barrel protein MDM10. The MDM12-MMM1 subcomplex functions in the major beta-barrel assembly pathway that is responsible for biogenesis of all mitochondrial outer membrane beta-barrel proteins, and acts in a late step after the SAM complex. The MDM10-MDM12-MMM1 subcomplex further acts in the TOM40-specific pathway after the action of the MDM12-MMM1 complex. Essential for establishing and maintaining the structure of mitochondria and maintenance of mtDNA nucleoids. The polypeptide is Mitochondrial distribution and morphology protein 12 (Saccharomyces cerevisiae (strain AWRI1631) (Baker's yeast)).